The following is a 437-amino-acid chain: Enolase 2 (437 aa).

Residue K60 forms a Glycyl lysine isopeptide (Lys-Gly) (interchain with G-Cter in ubiquitin) linkage. Phosphoserine is present on S138. H160 is a catalytic residue. Phosphoserine is present on S188. A Glycyl lysine isopeptide (Lys-Gly) (interchain with G-Cter in ubiquitin) cross-link involves residue K243. Mg(2+)-binding residues include D247 and E296. The residue at position 313 (T313) is a Phosphothreonine. D321 lines the Mg(2+) pocket. A Phosphothreonine modification is found at T324. Residue K358 forms a Glycyl lysine isopeptide (Lys-Gly) (interchain with G-Cter in ubiquitin) linkage.

It belongs to the enolase family. In terms of assembly, homodimer. The cofactor is Mg(2+).

It is found in the cytoplasm. The catalysed reaction is (2R)-2-phosphoglycerate = phosphoenolpyruvate + H2O. It functions in the pathway carbohydrate degradation; glycolysis; pyruvate from D-glyceraldehyde 3-phosphate: step 4/5. The polypeptide is Enolase 2 (ENO2) (Saccharomyces cerevisiae (strain ATCC 204508 / S288c) (Baker's yeast)).